The primary structure comprises 523 residues: MFSRVAKTSFSAVRAAKSQFSHSLSQQTSKTWVPAATCSKRSYAAEAKTSAAPVSGQIVAVIGAVVDVQFEDDLPPILNALEVQGRTSRLVLEVAQHLGENTVRTIAMDGTEGLIRGQKCVDTGSPISIPVGPETLGRIINVIGEPIDERGPIGTDRRSAIHAEAPEFVEMSVNQEILVTGIKVVDLLAPYAKGGKIGLFGGAGVGKTVLIMELINNVAKAHGGYSVFAGVGERTREGNDLYHEMIEGGVISLKDDTSKVALVYGQMNEPPGARARVALTGLTVAEYFRDQEGQDVLLFIDNIFRFTQAGSEVSALLGRIPSAVGYQPTLATDMGTMQERITTTKKGSITSVQAIYVPADDLTDPAPATTFAHLDATTVLSRGIAELGIYPAVDPLDSSSRIMDPNVVGERHYSIARGVQKILQDNKTLQDIIAILGMDELSEDDKLTVSRARKIQRFLSQPFQVAEVFTGSPGKLVSMAETIDGFESIIKGECDHLPEIAFYMVGNIQDVKDKADRLAEELS.

Residues 1–19 constitute a mitochondrion transit peptide; it reads MFSRVAKTSFSAVRAAKSQ. 201–208 serves as a coordination point for ATP; sequence GGAGVGKT.

The protein belongs to the ATPase alpha/beta chains family. In terms of assembly, F-type ATPases have 2 components, CF(1) - the catalytic core - and CF(0) - the membrane proton channel. CF(1) has five subunits: alpha(3), beta(3), gamma(1), delta(1), epsilon(1). CF(0) has three main subunits: a, b and c.

Its subcellular location is the mitochondrion. The protein resides in the mitochondrion inner membrane. The enzyme catalyses ATP + H2O + 4 H(+)(in) = ADP + phosphate + 5 H(+)(out). In terms of biological role, mitochondrial membrane ATP synthase (F(1)F(0) ATP synthase or Complex V) produces ATP from ADP in the presence of a proton gradient across the membrane which is generated by electron transport complexes of the respiratory chain. F-type ATPases consist of two structural domains, F(1) - containing the extramembraneous catalytic core, and F(0) - containing the membrane proton channel, linked together by a central stalk and a peripheral stalk. During catalysis, ATP synthesis in the catalytic domain of F(1) is coupled via a rotary mechanism of the central stalk subunits to proton translocation. Subunits alpha and beta form the catalytic core in F(1). Rotation of the central stalk against the surrounding alpha(3)beta(3) subunits leads to hydrolysis of ATP in three separate catalytic sites on the beta subunits. This is ATP synthase subunit beta, mitochondrial from Hemicentrotus pulcherrimus (Sea urchin).